Consider the following 986-residue polypeptide: Replication factor C subunit 1 (986 aa).

The segment at 1–95 (MQRGIDSFFK…ALSKLKRHVD (95 aa)) is disordered. 6 positions are modified to phosphoserine: Ser-18, Ser-28, Ser-40, Ser-41, Ser-48, and Ser-58. Thr-60 bears the Phosphothreonine mark. Phosphoserine is present on residues Ser-62 and Ser-63. Position 71 is a phosphothreonine (Thr-71). Phosphoserine is present on residues Ser-128, Ser-137, Ser-149, Ser-154, Ser-156, Ser-164, and Ser-194. Residues 136–147 (ESIKEAAPEKKV) show a composition bias toward basic and acidic residues. Disordered regions lie at residues 136–203 (ESIK…ERHE) and 317–388 (KQVK…NDVP). Thr-197 bears the Phosphothreonine mark. One can recognise a BRCT domain in the interval 232–322 (GSPDCLSGLT…SGIAKQVKEE (91 aa)). Composition is skewed to basic and acidic residues over residues 317 to 364 (KQVK…EKHD) and 370 to 385 (VKEE…DKLN). ATP is bound at residue 487–494 (GPPGIGKT). Positions 913–986 (SEAAGADDDY…ASKSKAKAKK (74 aa)) are disordered. Over residues 917 to 932 (GADDDYLDEGPGEEDG) the composition is skewed to acidic residues. A phosphoserine mark is found at Ser-938 and Ser-939. The short motif at 955 to 959 (KAKKR) is the Nuclear localization signal element. The span at 962–979 (TSKASGGSKKATSSTASK) shows a compositional bias: low complexity.

This sequence belongs to the activator 1 large subunit family. As to quaternary structure, interacts with C-terminus of PCNA.

It is found in the nucleus. The elongation of primed DNA templates by DNA polymerase delta and epsilon requires the action of the accessory proteins proliferating cell nuclear antigen (PCNA) and activator 1. This subunit binds to the primer-template junction. The protein is Replication factor C subunit 1 (Gnf1) of Drosophila melanogaster (Fruit fly).